We begin with the raw amino-acid sequence, 189 residues long: Peptidyl-tRNA hydrolase (189 aa).

Tyr14 serves as a coordination point for tRNA. His19 (proton acceptor) is an active-site residue. TRNA contacts are provided by Tyr64, Asn66, and Asn112.

This sequence belongs to the PTH family. In terms of assembly, monomer.

It is found in the cytoplasm. The enzyme catalyses an N-acyl-L-alpha-aminoacyl-tRNA + H2O = an N-acyl-L-amino acid + a tRNA + H(+). Its function is as follows. Hydrolyzes ribosome-free peptidyl-tRNAs (with 1 or more amino acids incorporated), which drop off the ribosome during protein synthesis, or as a result of ribosome stalling. Functionally, catalyzes the release of premature peptidyl moieties from peptidyl-tRNA molecules trapped in stalled 50S ribosomal subunits, and thus maintains levels of free tRNAs and 50S ribosomes. The sequence is that of Peptidyl-tRNA hydrolase from Clostridium botulinum (strain Loch Maree / Type A3).